Here is a 456-residue protein sequence, read N- to C-terminus: Adenylosuccinate lyase (456 aa).

N(6)-(1,2-dicarboxyethyl)-AMP contacts are provided by residues 15–16 (RY) and 90–92 (NHD). Lysine 94 bears the N6-acetyllysine mark. A N(6)-(1,2-dicarboxyethyl)-AMP-binding site is contributed by 122 to 123 (TS). Histidine 171 serves as the catalytic Proton donor/acceptor. Glutamine 247 provides a ligand contact to N(6)-(1,2-dicarboxyethyl)-AMP. Serine 295 functions as the Proton donor/acceptor in the catalytic mechanism. Residues serine 296, 301–303 (KVN), asparagine 309, arginine 335, and 340–344 (STVLR) contribute to the N(6)-(1,2-dicarboxyethyl)-AMP site. N6-acetyllysine is present on lysine 366.

It belongs to the lyase 1 family. Adenylosuccinate lyase subfamily. As to quaternary structure, homotetramer. Residues from neighboring subunits contribute catalytic and substrate-binding residues to each active site.

It catalyses the reaction N(6)-(1,2-dicarboxyethyl)-AMP = fumarate + AMP. The catalysed reaction is (2S)-2-[5-amino-1-(5-phospho-beta-D-ribosyl)imidazole-4-carboxamido]succinate = 5-amino-1-(5-phospho-beta-D-ribosyl)imidazole-4-carboxamide + fumarate. The protein operates within purine metabolism; AMP biosynthesis via de novo pathway; AMP from IMP: step 2/2. It participates in purine metabolism; IMP biosynthesis via de novo pathway; 5-amino-1-(5-phospho-D-ribosyl)imidazole-4-carboxamide from 5-amino-1-(5-phospho-D-ribosyl)imidazole-4-carboxylate: step 2/2. Its function is as follows. Catalyzes two reactions in de novo purine nucleotide biosynthesis. Catalyzes the breakdown of 5-aminoimidazole- (N-succinylocarboxamide) ribotide (SAICAR or 2-[5-amino-1-(5-phospho-beta-D-ribosyl)imidazole-4-carboxamido]succinate) to 5-aminoimidazole-4-carboxamide ribotide (AICAR or 5-amino-1-(5-phospho-beta-D-ribosyl)imidazole-4-carboxamide) and fumarate, and of adenylosuccinate (ADS or N(6)-(1,2-dicarboxyethyl)-AMP) to adenosine monophosphate (AMP) and fumarate. The sequence is that of Adenylosuccinate lyase (purB) from Escherichia coli O6:H1 (strain CFT073 / ATCC 700928 / UPEC).